Consider the following 382-residue polypeptide: Histidinol-phosphate aminotransferase (382 aa).

The segment at 1-24 is disordered; the sequence is MTSAPRPRPTLDDLPLREDLRGKS. The span at 9–22 shows a compositional bias: basic and acidic residues; sequence PTLDDLPLREDLRG. Lysine 233 is subject to N6-(pyridoxal phosphate)lysine.

It belongs to the class-II pyridoxal-phosphate-dependent aminotransferase family. Histidinol-phosphate aminotransferase subfamily. Homodimer. Requires pyridoxal 5'-phosphate as cofactor.

It catalyses the reaction L-histidinol phosphate + 2-oxoglutarate = 3-(imidazol-4-yl)-2-oxopropyl phosphate + L-glutamate. It functions in the pathway amino-acid biosynthesis; L-histidine biosynthesis; L-histidine from 5-phospho-alpha-D-ribose 1-diphosphate: step 7/9. This is Histidinol-phosphate aminotransferase from Mycobacterium ulcerans (strain Agy99).